Here is an 875-residue protein sequence, read N- to C-terminus: Alanine--tRNA ligase (875 aa).

The Zn(2+) site is built by His563, His567, Cys665, and His669.

Belongs to the class-II aminoacyl-tRNA synthetase family. The cofactor is Zn(2+).

Its subcellular location is the cytoplasm. The enzyme catalyses tRNA(Ala) + L-alanine + ATP = L-alanyl-tRNA(Ala) + AMP + diphosphate. Functionally, catalyzes the attachment of alanine to tRNA(Ala) in a two-step reaction: alanine is first activated by ATP to form Ala-AMP and then transferred to the acceptor end of tRNA(Ala). Also edits incorrectly charged Ser-tRNA(Ala) and Gly-tRNA(Ala) via its editing domain. This chain is Alanine--tRNA ligase, found in Shewanella pealeana (strain ATCC 700345 / ANG-SQ1).